The sequence spans 205 residues: High frequency lysogenization protein HflD homolog (205 aa).

Belongs to the HflD family.

The protein localises to the cytoplasm. It localises to the cell inner membrane. This Vibrio vulnificus (strain CMCP6) protein is High frequency lysogenization protein HflD homolog.